Here is a 699-residue protein sequence, read N- to C-terminus: Elongation factor G (699 aa).

In terms of domain architecture, tr-type G spans 8 to 283 (EHIRNIGICA…AVVDFLPSPI (276 aa)). GTP is bound by residues 17-24 (AHIDAGKT), 81-85 (DTPGH), and 135-138 (NKMD).

Belongs to the TRAFAC class translation factor GTPase superfamily. Classic translation factor GTPase family. EF-G/EF-2 subfamily.

It localises to the cytoplasm. Functionally, catalyzes the GTP-dependent ribosomal translocation step during translation elongation. During this step, the ribosome changes from the pre-translocational (PRE) to the post-translocational (POST) state as the newly formed A-site-bound peptidyl-tRNA and P-site-bound deacylated tRNA move to the P and E sites, respectively. Catalyzes the coordinated movement of the two tRNA molecules, the mRNA and conformational changes in the ribosome. The chain is Elongation factor G from Rickettsia parkeri.